Consider the following 1274-residue polypeptide: MALQQVRPTNKQCRKNKKRAKAKMMESPRRLCRWAIISYEGSPRIACNATDETAESPFLRNRERSSCINRGFDISYCVRCAFTPDEHCVWEPCCAIQSVRQQVEVGTSKRTMDIYSPLQFCFRVTGLRVSAVIRLEYVQALFSQPISKVDQVSVGTVTNTITTLSNTIQQSISDKLAILFQSLALLLAAFIIAFKYSWALTLVTSSALLFVVVGCSVTLPFMTKIQQKIDKADEKHSSIAAEVFGSIRTVISLGAQESLSKRYTTWVEEARKRGNGLSLIFGIHFALVFFALYASFSLAFWFGLKLYREGHIGEINTVITVFFSVMIVVSVLGNIASPLIIVSKAASAAGSFFELIDSEKVDSGGLREPDASAHVDIIFRDVRFTYPTRPDVPVLKGLDIRFQNGKTTALVGPSGSGKSTIVALIERWYQLAMSPEDQNQGSIYVGPHDINSLDLKWWRSQIGLVQQEPFLFNDTIFNNVAFGLIGTQWEKEPDSVKKELIEKACREAFAEEFIQRLPEGYATIVGQNGIKLSGGQRQRLAIARSIVKEPKILILDEATSAIDVRGEKIVQAALDRVSRNRTTIMIAHRLSTIRRADHIVVMKGGVNVEEGTHEELLQREGGVYRDLVNAQRLELLAEEDSHTGNAVLELQDEAQSPTMSVQEKLQDEDNTQDKNRGFIRTIGLVLYEQRARWPLYVAVLISTAGAGTAFPLQSWLFAKLIEVFRFTGQKLVDAANFWALMFFLLALAVGVLYSTVGFTANSLSVRISEACRKEYFQNILAKPIPFHDLSENASGSIVSRLATDPKQVQELIGLNGAFPLISTFSMIGCIAIAFSFGWKLSLVTVFAALPCTFLAAFMRIRYELQFEAMNAAVYAGSSQFAAEAIDAFRTVSSLTMEDAILDRYTQLLREQQKKAFRKARYATLIFAFSDSVELCAMALTFWYGGQLLASREYQPTSFFVIFMAIIQGGQSAGQFFSFASNFAQAAASANRILNSRPQSDELGAASIEKQQLVRSGDLTGATVEFHDVSFRYASQDVPLFTGLNVSIQSGQFVAFVGPSGCGKTTVISLLERFYSPSQGTITFNGEDIRTLEMTSYRRELSLVAQEPRLFEGSIRENITLGLDQSEFTEEELIQACKDAEIHDFITSLPEGYATELGIKAQTSLSGGQRQRLCIARALLRKPSLLLLDEATSSLDSQSEKVVQGAMERLAQKRSLTIVAVAHRLATIQKADTIYVFGTAHAGQASRIVEQGTHQELLRAKGTYWQMVSSPRFLT.

The N-linked (GlcNAc...) asparagine glycan is linked to Asn48. Residues 120–344 (FCFRVTGLRV…IASPLIIVSK (225 aa)) form the ABC transmembrane type-1 1 domain. Transmembrane regions (helical) follow at residues 183–203 (LALL…LTLV), 205–225 (SSAL…MTKI), 280–300 (IFGI…SLAF), and 321–341 (VFFS…PLII). The 253-residue stretch at 377–629 (IIFRDVRFTY…EGGVYRDLVN (253 aa)) folds into the ABC transporter 1 domain. 412–419 (GPSGSGKS) serves as a coordination point for ATP. Residues Asn473 and Asn580 are each glycosylated (N-linked (GlcNAc...) asparagine). 2 consecutive transmembrane segments (helical) span residues 697 to 717 (VAVL…SWLF) and 737 to 757 (FWAL…STVG). Residues 697–984 (VAVLISTAGA…FFSFASNFAQ (288 aa)) form the ABC transmembrane type-1 2 domain. N-linked (GlcNAc...) asparagine glycosylation is present at Asn792. 3 helical membrane passes run 818-838 (FPLI…SFGW), 840-860 (LSLV…FMRI), and 924-944 (LIFA…FWYG). The 247-residue stretch at 1023 to 1269 (VEFHDVSFRY…KGTYWQMVSS (247 aa)) folds into the ABC transporter 2 domain. An N-linked (GlcNAc...) asparagine glycan is attached at Asn1044. Residue 1057 to 1064 (GPSGCGKT) participates in ATP binding. Asn1117 carries N-linked (GlcNAc...) asparagine glycosylation.

This sequence belongs to the ABC transporter superfamily. ABCB family. Multidrug resistance exporter (TC 3.A.1.201) subfamily.

It is found in the cell membrane. Its function is as follows. Pleiotropic ABC efflux transporter that may be involved in A.fumigatus adaptation to azoles such as vorizonazole. This Aspergillus fumigatus (strain ATCC MYA-4609 / CBS 101355 / FGSC A1100 / Af293) (Neosartorya fumigata) protein is ABC multidrug transporter E.